A 61-amino-acid chain; its full sequence is Small ribosomal subunit protein uS14 (61 aa).

Residues C24, C27, C40, and C43 each contribute to the Zn(2+) site.

It belongs to the universal ribosomal protein uS14 family. Zinc-binding uS14 subfamily. In terms of assembly, part of the 30S ribosomal subunit. Contacts proteins S3 and S10. Requires Zn(2+) as cofactor.

Binds 16S rRNA, required for the assembly of 30S particles and may also be responsible for determining the conformation of the 16S rRNA at the A site. This chain is Small ribosomal subunit protein uS14, found in Chloroflexus aurantiacus (strain ATCC 29364 / DSM 637 / Y-400-fl).